We begin with the raw amino-acid sequence, 318 residues long: Ribonuclease Z (318 aa).

Residues H63, H65, D67, H68, H142, D210, and H268 each contribute to the Zn(2+) site. The active-site Proton acceptor is D67.

Belongs to the RNase Z family. Homodimer. The cofactor is Zn(2+).

The catalysed reaction is Endonucleolytic cleavage of RNA, removing extra 3' nucleotides from tRNA precursor, generating 3' termini of tRNAs. A 3'-hydroxy group is left at the tRNA terminus and a 5'-phosphoryl group is left at the trailer molecule.. Functionally, zinc phosphodiesterase, which displays some tRNA 3'-processing endonuclease activity. Probably involved in tRNA maturation, by removing a 3'-trailer from precursor tRNA. The polypeptide is Ribonuclease Z (Thermobifida fusca (strain YX)).